Here is a 343-residue protein sequence, read N- to C-terminus: Lipopolysaccharide core biosynthesis glycosyltransferase LpsD (343 aa).

Belongs to the glycosyltransferase group 1 family. Glycosyltransferase 4 subfamily.

It functions in the pathway bacterial outer membrane biogenesis; LPS core biosynthesis. The protein is Lipopolysaccharide core biosynthesis glycosyltransferase LpsD (lpsD) of Rhizobium meliloti (strain 1021) (Ensifer meliloti).